The primary structure comprises 361 residues: Septin-2 (361 aa).

A Phosphotyrosine modification is found at tyrosine 17. The 273-residue stretch at 34-306 (KGFEFTLMVV…ENFRSERLKR (273 aa)) folds into the Septin-type G domain. Positions 44–51 (GESGLGKS) are G1 motif. GTP is bound by residues 44-51 (GESGLGKS), threonine 78, glycine 104, and 183-191 (KADTLTLKE). The G3 motif stretch occupies residues 101–104 (DTPG). The G4 motif stretch occupies residues 182–185 (AKAD). Lysine 190 is subject to N6-acetyllysine. Tyrosine 211 is modified (phosphotyrosine). Serine 218 bears the Phosphoserine mark. GTP contacts are provided by glycine 241 and arginine 256. The segment at 260–270 (WGVVEVENPEH) is important for dimerization.

This sequence belongs to the TRAFAC class TrmE-Era-EngA-EngB-Septin-like GTPase superfamily. Septin GTPase family. In terms of assembly, septins polymerize into heterooligomeric protein complexes that form filaments, and associate with cellular membranes, actin filaments and microtubules. GTPase activity is required for filament formation. Filaments are assembled from asymmetrical heterotrimers, composed of SEPTIN2, SEPTIN6 and SEPTIN7 that associate head-to-head to form a hexameric unit. Interaction between SEPTIN2 and SEPTIN7 seems indirect. Interacts with SEPTIN5. Interaction with SEPTIN4 not detected. Interacts with SEPTIN9. Component of a septin core octameric complex consisting of SEPTIN12, SEPTIN7, SEPTIN6 and SEPTIN2 or SEPTIN4 in the order 12-7-6-2-2-6-7-12 or 12-7-6-4-4-6-7-12 and located in the sperm annulus. Interacts with MAP4. Interacts with DZIP1L.

The protein resides in the cytoplasm. The protein localises to the cytoskeleton. Its subcellular location is the spindle. It is found in the chromosome. It localises to the centromere. The protein resides in the kinetochore. The protein localises to the cleavage furrow. Its subcellular location is the midbody. It is found in the cell cortex. It localises to the cell projection. The protein resides in the cilium membrane. The protein localises to the cilium. Its subcellular location is the flagellum. In terms of biological role, filament-forming cytoskeletal GTPase. Forms a filamentous structure with SEPTIN12, SEPTIN6, SEPTIN2 and probably SEPTIN4 at the sperm annulus which is required for the structural integrity and motility of the sperm tail during postmeiotic differentiation. Required for normal organization of the actin cytoskeleton. Plays a role in the biogenesis of polarized columnar-shaped epithelium by maintaining polyglutamylated microtubules, thus facilitating efficient vesicle transport, and by impeding MAP4 binding to tubulin. Required for the progression through mitosis. Forms a scaffold at the midplane of the mitotic splindle required to maintain CENPE localization at kinetochores and consequently chromosome congression. During anaphase, may be required for chromosome segregation and spindle elongation. Plays a role in ciliogenesis and collective cell movements. In cilia, required for the integrity of the diffusion barrier at the base of the primary cilium that prevents diffusion of transmembrane proteins between the cilia and plasma membranes: probably acts by regulating the assembly of the tectonic-like complex (also named B9 complex) by localizing TMEM231 protein. The polypeptide is Septin-2 (Bos taurus (Bovine)).